The chain runs to 81 residues: ATP synthase subunit c (81 aa).

2 consecutive transmembrane segments (helical) span residues 6–26 (AAAS…GPGF) and 57–77 (LAFM…LLFA).

This sequence belongs to the ATPase C chain family. F-type ATPases have 2 components, F(1) - the catalytic core - and F(0) - the membrane proton channel. F(1) has five subunits: alpha(3), beta(3), gamma(1), delta(1), epsilon(1). F(0) has four main subunits: a(1), b(1), b'(1) and c(10-14). The alpha and beta chains form an alternating ring which encloses part of the gamma chain. F(1) is attached to F(0) by a central stalk formed by the gamma and epsilon chains, while a peripheral stalk is formed by the delta, b and b' chains.

It localises to the cellular thylakoid membrane. Its function is as follows. F(1)F(0) ATP synthase produces ATP from ADP in the presence of a proton or sodium gradient. F-type ATPases consist of two structural domains, F(1) containing the extramembraneous catalytic core and F(0) containing the membrane proton channel, linked together by a central stalk and a peripheral stalk. During catalysis, ATP synthesis in the catalytic domain of F(1) is coupled via a rotary mechanism of the central stalk subunits to proton translocation. Key component of the F(0) channel; it plays a direct role in translocation across the membrane. A homomeric c-ring of between 10-14 subunits forms the central stalk rotor element with the F(1) delta and epsilon subunits. In Rippkaea orientalis (strain PCC 8801 / RF-1) (Cyanothece sp. (strain PCC 8801)), this protein is ATP synthase subunit c.